We begin with the raw amino-acid sequence, 75 residues long: UPF0270 protein PP_1747 (75 aa).

It belongs to the UPF0270 family.

The sequence is that of UPF0270 protein PP_1747 from Pseudomonas putida (strain ATCC 47054 / DSM 6125 / CFBP 8728 / NCIMB 11950 / KT2440).